A 141-amino-acid polypeptide reads, in one-letter code: Thioredoxin-like protein SkfH (141 aa).

Residues 2-141 (KDEQMLTEWP…DKMLKKIAGL (140 aa)) form the Thioredoxin domain. A disulfide bridge connects residues C41 and C44.

In terms of biological role, required for production of the bacteriocin SkfA. The polypeptide is Thioredoxin-like protein SkfH (Bacillus subtilis (strain 168)).